The sequence spans 259 residues: Ribonuclease T2-B (259 aa).

An N-terminal signal peptide occupies residues 1–29; that stretch reads MAPAEARGALPGWISVLGWGLALCSLCGA. A disulfide bridge links Cys-53 with Cys-59. The active site involves His-69. Intrachain disulfides connect Cys-79/Cys-125, Cys-188/Cys-244, and Cys-206/Cys-217. Residues Asn-80 and Asn-110 are each glycosylated (N-linked (GlcNAc...) asparagine). Active-site residues include Glu-118 and His-122. An N-linked (GlcNAc...) asparagine glycan is attached at Asn-216.

It belongs to the RNase T2 family.

Its subcellular location is the secreted. It localises to the lysosome lumen. The protein localises to the endoplasmic reticulum lumen. It is found in the mitochondrion intermembrane space. The catalysed reaction is a ribonucleotidyl-ribonucleotide-RNA + H2O = a 3'-end 3'-phospho-ribonucleotide-RNA + a 5'-end dephospho-ribonucleoside-RNA + H(+). It carries out the reaction an adenylyl-uridine-RNA = a 3'-end 2',3'-cyclophospho-AMP-RNA + a 5'-end dephospho-uridine-RNA. It catalyses the reaction a guanylyl-uridine-RNA = a 3'-end 2',3'-cyclophospho-GMP-RNA + a 5'-end dephospho-uridine-RNA. Inhibited by Zn(2+) and Cu(2+). In terms of biological role, ribonuclease that plays an essential role in innate immune response by recognizing and degrading RNAs from microbial pathogens that are subsequently sensed by TLR8. Cleaves preferentially single-stranded RNA molecules between purine and uridine residues, which critically contributes to the supply of catabolic uridine and the generation of purine-2',3'-cyclophosphate-terminated oligoribonucleotides. In turn, RNase T2 degradation products promote the RNA-dependent activation of TLR8. In plasmacytoid dendritic cells, it cooperates with PLD3 or PLD4 5'-&gt;3' exonucleases to process RNA fragments and release 2',3'-cyclic guanosine monophosphate (2',3'-cGMP), a potent stimulatory ligand for TLR7. Also plays a key role in degradation of mitochondrial RNA and processing of non-coding RNA imported from the cytosol into mitochondria. Participates as well in degradation of mitochondrion-associated cytosolic rRNAs. The sequence is that of Ribonuclease T2-B from Mus musculus (Mouse).